A 376-amino-acid polypeptide reads, in one-letter code: Putative glutamate--cysteine ligase 2-1 (376 aa).

The protein belongs to the glutamate--cysteine ligase type 2 family. YbdK subfamily.

It catalyses the reaction L-cysteine + L-glutamate + ATP = gamma-L-glutamyl-L-cysteine + ADP + phosphate + H(+). Functionally, ATP-dependent carboxylate-amine ligase which exhibits weak glutamate--cysteine ligase activity. The polypeptide is Putative glutamate--cysteine ligase 2-1 (Rubrobacter xylanophilus (strain DSM 9941 / JCM 11954 / NBRC 16129 / PRD-1)).